The following is a 387-amino-acid chain: Gamma-butyrobetaine dioxygenase (387 aa).

4 residues coordinate Zn(2+): Cys38, Cys40, Cys43, and His82. The Fe cation site is built by His202, Asp204, and His347. Position 351 is a phosphoserine (Ser351).

Belongs to the gamma-BBH/TMLD family. The cofactor is Fe(2+). L-ascorbate is required as a cofactor. As to expression, highly expressed in kidney; moderately expressed in liver; very low expression in brain.

The protein localises to the cytoplasm. It catalyses the reaction 4-(trimethylamino)butanoate + 2-oxoglutarate + O2 = carnitine + succinate + CO2. Its pathway is amine and polyamine biosynthesis; carnitine biosynthesis. Catalyzes the formation of L-carnitine from gamma-butyrobetaine. The chain is Gamma-butyrobetaine dioxygenase (BBOX1) from Homo sapiens (Human).